The chain runs to 118 residues: Waprin-Enh1 (118 aa).

The first 24 residues, 1 to 24 (MKTLTGLLLVGLLALWIGLPSTSS), serve as a signal peptide directing secretion. WAP domains follow at residues 25 to 72 (KILF…RSCR) and 74 to 118 (PPVL…RICK). Cystine bridges form between Cys-30-Cys-63, Cys-40-Cys-67, Cys-50-Cys-62, Cys-56-Cys-71, Cys-81-Cys-109, Cys-88-Cys-113, Cys-96-Cys-108, and Cys-102-Cys-117.

It belongs to the venom waprin family. In terms of tissue distribution, expressed by the venom gland.

It is found in the secreted. Damages membranes of susceptible bacteria. Has no hemolytic activity. Not toxic to mice. Does not inhibit the proteinases elastase and cathepsin G. The protein is Waprin-Enh1 of Pseudoferania polylepis (Macleay's water snake).